A 577-amino-acid polypeptide reads, in one-letter code: MLHEIILLLAGNTSGLFIEKNGQILLHPSVQPLHPGERELINDIVSLASKRKRIERYIEIFDEDLIQQNQFLLKALRLLLSKKLFLYDESLANLERMIISSDPYFVGSGKFVSLAQLEAHLADWKETLSSLLVLQGNISQCLSVASTFQKLHNMYMGSTHLNFKKLVLECECAFQKTWLDELVQYLVNDSGDDSFKCSFLCGDTKDFVSCSNNVPFLTQDIVNCLVSIRTCMLNAKKCFTDAFCEILRCFYRLVYEMPLPLTKSSVTKLADEMFTLVSEKIIFQLASFHQIFDLVKMLEMVMLLENVEFLPTLSEMFRDVRGEYCSSNDVQGVVIDDILPVVLRKTISLLDLATEYGECVSFLKLVSIFDEEDEMIRSENRKIDVEGLNMQLLLCLKWPFNLFMDKNALNVYSDLWILLGSLHLSITKIKSLFYERKEYTAKGISQPWTQLWVTLWFLSSLQYYAYECVIKPSYCKLRESLTELYRTQKLRMQDCSQLHALTLTYAKKMLFFYDDDLHISLNSIYHELSLFRSQEVSKVDCQLAAHVSHSIECIRQKENDPSYDREIINALIVQLNL.

This sequence belongs to the TUBGCP family.

It localises to the cytoplasm. The protein resides in the cytoskeleton. It is found in the microtubule organizing center. The protein localises to the spindle pole body. Functionally, required for proper anchoring of astral microtubules at the spindle pole bodies (SPBs), during anaphase, ensuring correct cell polarity. This Schizosaccharomyces pombe (strain 972 / ATCC 24843) (Fission yeast) protein is Gamma-tubulin complex component gfh1 (gfh1).